The following is a 600-amino-acid chain: Methionine--tRNA ligase (600 aa).

Positions 12–22 match the 'HIGH' region motif; sequence PYANGPRHIGH. Residues C144, C147, C157, and C160 each coordinate Zn(2+). The 'KMSKS' region motif lies at 351–355; sequence KFSSS. S354 serves as a coordination point for ATP.

It belongs to the class-I aminoacyl-tRNA synthetase family. MetG type 1 subfamily. In terms of assembly, monomer. Zn(2+) serves as cofactor.

It localises to the cytoplasm. It catalyses the reaction tRNA(Met) + L-methionine + ATP = L-methionyl-tRNA(Met) + AMP + diphosphate. Its function is as follows. Is required not only for elongation of protein synthesis but also for the initiation of all mRNA translation through initiator tRNA(fMet) aminoacylation. The polypeptide is Methionine--tRNA ligase (Chloroflexus aurantiacus (strain ATCC 29364 / DSM 637 / Y-400-fl)).